We begin with the raw amino-acid sequence, 171 residues long: Probable chemoreceptor glutamine deamidase CheD 1 (171 aa).

Residues 1-18 (MTRTTGAAPDRAAPAAGE) are compositionally biased toward low complexity. Residues 1-23 (MTRTTGAAPDRAAPAAGETPGGG) are disordered.

Belongs to the CheD family.

The enzyme catalyses L-glutaminyl-[protein] + H2O = L-glutamyl-[protein] + NH4(+). In terms of biological role, probably deamidates glutamine residues to glutamate on methyl-accepting chemotaxis receptors (MCPs), playing an important role in chemotaxis. This is Probable chemoreceptor glutamine deamidase CheD 1 from Anaeromyxobacter dehalogenans (strain 2CP-C).